The primary structure comprises 245 residues: Orotidine 5'-phosphate decarboxylase (245 aa).

Residues Asp-22, Lys-44, 71–80 (DLKFHDIPNT), Thr-131, Arg-192, Gln-201, Gly-221, and Arg-222 each bind substrate. Catalysis depends on Lys-73, which acts as the Proton donor.

This sequence belongs to the OMP decarboxylase family. Type 1 subfamily. As to quaternary structure, homodimer.

It catalyses the reaction orotidine 5'-phosphate + H(+) = UMP + CO2. Its pathway is pyrimidine metabolism; UMP biosynthesis via de novo pathway; UMP from orotate: step 2/2. Functionally, catalyzes the decarboxylation of orotidine 5'-monophosphate (OMP) to uridine 5'-monophosphate (UMP). The polypeptide is Orotidine 5'-phosphate decarboxylase (Escherichia coli (strain K12 / MC4100 / BW2952)).